Reading from the N-terminus, the 189-residue chain is Probable pericyclase scpY (189 aa).

This sequence belongs to the pericyclase pydY family.

It participates in mycotoxin biosynthesis. In terms of biological role, probable pericyclase; part of the gene scp cluster that mediates the biosynthesis of a hirsutellone-like compound that has still to be identified. The sequence is that of Probable pericyclase scpY from Mollisia scopiformis (Conifer needle endophyte fungus).